A 216-amino-acid chain; its full sequence is Adenylate kinase (216 aa).

10–15 (GAGKGT) serves as a coordination point for ATP. Positions 30–59 (STGDIFRKNISNKTPLGMEAKSYMDKGQLV) are NMP. Residues T31, R36, 57–59 (QLV), 85–88 (GFPR), and Q92 each bind AMP. The tract at residues 126–163 (GRRVCGECGASYHIKFITPKTEGVCDLCGGKLVQRKDD) is LID. Residue R127 coordinates ATP. Zn(2+) is bound by residues C130 and C133. Position 136-137 (136-137 (SY)) interacts with ATP. Zn(2+) is bound by residues C150 and C153. Residues R160 and R171 each contribute to the AMP site. K199 serves as a coordination point for ATP.

Belongs to the adenylate kinase family. In terms of assembly, monomer.

It localises to the cytoplasm. It catalyses the reaction AMP + ATP = 2 ADP. The protein operates within purine metabolism; AMP biosynthesis via salvage pathway; AMP from ADP: step 1/1. Functionally, catalyzes the reversible transfer of the terminal phosphate group between ATP and AMP. Plays an important role in cellular energy homeostasis and in adenine nucleotide metabolism. The sequence is that of Adenylate kinase from Clostridium tetani (strain Massachusetts / E88).